A 206-amino-acid polypeptide reads, in one-letter code: 2,3-bisphosphoglycerate-dependent phosphoglycerate mutase (206 aa).

Substrate contacts are provided by residues 9–16 (RHGQSEWN), 22–23 (TG), arginine 61, 88–91 (ERDY), lysine 99, 115–116 (RR), and 159–160 (GN). Histidine 10 serves as the catalytic Tele-phosphohistidine intermediate. The Proton donor/acceptor role is filled by glutamate 88.

The protein belongs to the phosphoglycerate mutase family. BPG-dependent PGAM subfamily. In terms of assembly, homodimer.

It carries out the reaction (2R)-2-phosphoglycerate = (2R)-3-phosphoglycerate. It participates in carbohydrate degradation; glycolysis; pyruvate from D-glyceraldehyde 3-phosphate: step 3/5. Catalyzes the interconversion of 2-phosphoglycerate and 3-phosphoglycerate. In Bartonella quintana (strain Toulouse) (Rochalimaea quintana), this protein is 2,3-bisphosphoglycerate-dependent phosphoglycerate mutase.